The following is a 274-amino-acid chain: UPF0173 metal-dependent hydrolase A2cp1_1196 (274 aa).

The protein belongs to the UPF0173 family.

The polypeptide is UPF0173 metal-dependent hydrolase A2cp1_1196 (Anaeromyxobacter dehalogenans (strain 2CP-1 / ATCC BAA-258)).